The following is a 343-amino-acid chain: Stimulator of interferon genes protein homolog (343 aa).

Residue Asn-84 is glycosylated (N-linked (GlcNAc...) asparagine). 2 helical membrane-spanning segments follow: residues 87–107 (IYLIVGFLLVAFFRISVTGNY) and 109–129 (NVMPTTLFLFQMPLYWIWSFT). Asn-157 lines the 3',2'-cGAMP pocket. A glycan (N-linked (GlcNAc...) asparagine) is linked at Asn-187. Residues 195–215 (LVILIPDEMFVNGVLESHLLD) form a helical membrane-spanning segment. 3',2'-cGAMP contacts are provided by Arg-232, Lys-235, Glu-255, Thr-258, and Ser-262. Residues Asn-270 and Asn-333 are each glycosylated (N-linked (GlcNAc...) asparagine).

This sequence belongs to the STING family.

The protein resides in the endoplasmic reticulum membrane. Facilitator of innate immune signaling that binds cyclic dinucleotides produced in response to infection by bacteria and/or viruses, and promotes the activation of the NF-kappa-B transcription factor Rel (Relish). Recognizes and binds cyclic di-GMP (c-di-GMP), a cyclic dinucleotide messenger produced by bacteria such as L.monocytogenes, leading to activation of the peptidoglycan recognition protein (IMD) signaling pathway and activation of Rel (Relish). Innate immune response is triggered in response to double-stranded RNA from viruses delivered to the cytoplasm: Sting acts by specifically binding cyclic dinucleotides 3',2'-cGAMP and 2',3'-cGAMP produced by cGlr1 and cGlr2 in response to RNA virus in the cytosol. Has a strong preference for 3',2'-cGAMP compared to other cyclic dinucleotides such as 2',3'-cGAMP or 3'3'-c-di-GMP. Upon binding to 3',2'-cGAMP, activates an antiviral immune response, leading to the activation of Rel (Relish). Activated in brain in response to Zika virus infection, leading to autophagy. This chain is Stimulator of interferon genes protein homolog, found in Drosophila melanogaster (Fruit fly).